Consider the following 115-residue polypeptide: Meromycolate extension acyl carrier protein (115 aa).

One can recognise a Carrier domain in the interval 3 to 81 (VTQEEIIAGI…DVVTYIQKLE (79 aa)). Residue Ser41 is modified to O-(pantetheine 4'-phosphoryl)serine.

Belongs to the acyl carrier protein (ACP) family. Post-translationally, 4'-phosphopantetheine is transferred from CoA to a specific serine of apo-AcpM.

The protein resides in the cytoplasm. Its function is as follows. Acyl carrier protein involved in meromycolate extension. This is Meromycolate extension acyl carrier protein (acpM) from Mycobacterium leprae (strain TN).